We begin with the raw amino-acid sequence, 145 residues long: Large ribosomal subunit protein uL13 (145 aa).

The disordered stretch occupies residues 72 to 91; the sequence is DKMYHRHSNHPGGLKSISAG.

Belongs to the universal ribosomal protein uL13 family. In terms of assembly, part of the 50S ribosomal subunit.

This protein is one of the early assembly proteins of the 50S ribosomal subunit, although it is not seen to bind rRNA by itself. It is important during the early stages of 50S assembly. This Staphylococcus epidermidis (strain ATCC 12228 / FDA PCI 1200) protein is Large ribosomal subunit protein uL13.